Reading from the N-terminus, the 434-residue chain is Glutamate-1-semialdehyde 2,1-aminomutase (434 aa).

N6-(pyridoxal phosphate)lysine is present on K274.

It belongs to the class-III pyridoxal-phosphate-dependent aminotransferase family. HemL subfamily. As to quaternary structure, homodimer. It depends on pyridoxal 5'-phosphate as a cofactor.

The protein resides in the cytoplasm. It carries out the reaction (S)-4-amino-5-oxopentanoate = 5-aminolevulinate. The protein operates within porphyrin-containing compound metabolism; protoporphyrin-IX biosynthesis; 5-aminolevulinate from L-glutamyl-tRNA(Glu): step 2/2. This Acidovorax ebreus (strain TPSY) (Diaphorobacter sp. (strain TPSY)) protein is Glutamate-1-semialdehyde 2,1-aminomutase.